The following is a 202-amino-acid chain: Polyamine-modulated factor 1 (202 aa).

Positions 1–15 (MAEVSRDSEAAERGP) are enriched in basic and acidic residues. Residues 1–26 (MAEVSRDSEAAERGPEGSSPEAVPGD) form a disordered region. Residues 153–194 (EAKNQELADAVLAGRRQVEELQQQVRALQQTWQALHREQREL) are a coiled coil.

Component of the MIS12 complex composed of MIS12, DSN1, NSL1 and PMF1. Interacts with COPS7A. Interacts via its coiled-coil domain with the leucine-zipper domain of NFE2L2. The interaction with NFE2L2 is required for the transcriptional regulation of SSAT.

The protein resides in the nucleus. The protein localises to the chromosome. Its subcellular location is the centromere. It is found in the kinetochore. Part of the MIS12 complex which is required for normal chromosome alignment and segregation and for kinetochore formation during mitosis. May act as a cotranscription partner of NFE2L2 involved in regulation of polyamine-induced transcription of SSAT. The sequence is that of Polyamine-modulated factor 1 from Mus musculus (Mouse).